The chain runs to 492 residues: Protein nucleotidyltransferase YdiU (492 aa).

ATP contacts are provided by G91, G93, R94, K114, D126, G127, R180, and R187. The active-site Proton acceptor is the D256. Positions 257 and 266 each coordinate Mg(2+). D266 lines the ATP pocket.

This sequence belongs to the SELO family. Requires Mg(2+) as cofactor. Mn(2+) is required as a cofactor.

It catalyses the reaction L-seryl-[protein] + ATP = 3-O-(5'-adenylyl)-L-seryl-[protein] + diphosphate. The enzyme catalyses L-threonyl-[protein] + ATP = 3-O-(5'-adenylyl)-L-threonyl-[protein] + diphosphate. It carries out the reaction L-tyrosyl-[protein] + ATP = O-(5'-adenylyl)-L-tyrosyl-[protein] + diphosphate. The catalysed reaction is L-histidyl-[protein] + UTP = N(tele)-(5'-uridylyl)-L-histidyl-[protein] + diphosphate. It catalyses the reaction L-seryl-[protein] + UTP = O-(5'-uridylyl)-L-seryl-[protein] + diphosphate. The enzyme catalyses L-tyrosyl-[protein] + UTP = O-(5'-uridylyl)-L-tyrosyl-[protein] + diphosphate. In terms of biological role, nucleotidyltransferase involved in the post-translational modification of proteins. It can catalyze the addition of adenosine monophosphate (AMP) or uridine monophosphate (UMP) to a protein, resulting in modifications known as AMPylation and UMPylation. The sequence is that of Protein nucleotidyltransferase YdiU from Synechococcus sp. (strain ATCC 27144 / PCC 6301 / SAUG 1402/1) (Anacystis nidulans).